The primary structure comprises 438 residues: GTPase Der (438 aa).

2 EngA-type G domains span residues proline 3–glutamate 168 and isoleucine 179–arginine 354. GTP-binding positions include glycine 9–serine 16, aspartate 56–tyrosine 60, asparagine 120–aspartate 123, glycine 185–serine 192, aspartate 232–leucine 236, and asparagine 297–aspartate 300. In terms of domain architecture, KH-like spans glutamine 355–lysine 438.

Belongs to the TRAFAC class TrmE-Era-EngA-EngB-Septin-like GTPase superfamily. EngA (Der) GTPase family. Associates with the 50S ribosomal subunit.

GTPase that plays an essential role in the late steps of ribosome biogenesis. The protein is GTPase Der of Chlorobaculum parvum (strain DSM 263 / NCIMB 8327) (Chlorobium vibrioforme subsp. thiosulfatophilum).